The sequence spans 503 residues: ATP synthase subunit alpha (503 aa).

170–177 (GDRQTGKT) serves as a coordination point for ATP.

This sequence belongs to the ATPase alpha/beta chains family. F-type ATPases have 2 components, CF(1) - the catalytic core - and CF(0) - the membrane proton channel. CF(1) has five subunits: alpha(3), beta(3), gamma(1), delta(1), epsilon(1). CF(0) has three main subunits: a(1), b(2) and c(9-12). The alpha and beta chains form an alternating ring which encloses part of the gamma chain. CF(1) is attached to CF(0) by a central stalk formed by the gamma and epsilon chains, while a peripheral stalk is formed by the delta and b chains.

The protein resides in the cell inner membrane. It catalyses the reaction ATP + H2O + 4 H(+)(in) = ADP + phosphate + 5 H(+)(out). Functionally, produces ATP from ADP in the presence of a proton gradient across the membrane. The alpha chain is a regulatory subunit. The sequence is that of ATP synthase subunit alpha from Thermotoga maritima (strain ATCC 43589 / DSM 3109 / JCM 10099 / NBRC 100826 / MSB8).